The sequence spans 167 residues: uncharacterized protein (167 aa).

The a divalent metal cation site is built by His-48, His-127, and His-131.

The protein belongs to the DinB family.

This is an uncharacterized protein from Bacillus subtilis (strain 168).